The chain runs to 72 residues: UPF0495 protein KLLA0D04334g (72 aa).

The chain crosses the membrane as a helical span at residues 20–42 (PVELTPLFLAMGVALASGTWFSY).

It belongs to the UPF0495 family.

It is found in the membrane. In Kluyveromyces lactis (strain ATCC 8585 / CBS 2359 / DSM 70799 / NBRC 1267 / NRRL Y-1140 / WM37) (Yeast), this protein is UPF0495 protein KLLA0D04334g.